The chain runs to 475 residues: Ankyrin repeat, SAM and basic leucine zipper domain-containing protein 1 (475 aa).

Residues 1 to 38 (MATGSLRGLAVAGGGESSDSEDDGWEIGYLDRPPQKLK) form a disordered region. Ser-17, Ser-18, and Ser-20 each carry phosphoserine. 6 ANK repeats span residues 45-74 (EKNE…SVDS), 78-107 (YGWT…NASF), 110-144 (DKQT…DPNV), 148-177 (RLMT…EVNI), 181-210 (NGYT…NKTL), and 214-243 (DGKT…PLEG). The SAM domain occupies 272–334 (SYTAFGDLEI…KILAALKELE (63 aa)).

In terms of assembly, interacts with DDX4, PIWIL1, RANBP9 and TDRD1.

The protein localises to the cytoplasm. In terms of biological role, plays a central role during spermatogenesis by repressing transposable elements and preventing their mobilization, which is essential for the germline integrity. Acts via the piRNA metabolic process, which mediates the repression of transposable elements during meiosis by forming complexes composed of piRNAs and Piwi proteins and governs the methylation and subsequent repression of transposons. Its association with pi-bodies suggests a participation in the primary piRNAs metabolic process. Required prior to the pachytene stage to facilitate the production of multiple types of piRNAs, including those associated with repeats involved in the regulation of retrotransposons. May act by mediating protein-protein interactions during germ cell maturation. The chain is Ankyrin repeat, SAM and basic leucine zipper domain-containing protein 1 (ASZ1) from Oryctolagus cuniculus (Rabbit).